The primary structure comprises 631 residues: tRNA uridine 5-carboxymethylaminomethyl modification enzyme MnmG (631 aa).

Residues 13–18, Val-125, and Ser-180 each bind FAD; that span reads GGGHAG. 273–287 contacts NAD(+); that stretch reads GPRYCPSIEDKVMRF. Position 370 (Gln-370) interacts with FAD.

The protein belongs to the MnmG family. Homodimer. Heterotetramer of two MnmE and two MnmG subunits. The cofactor is FAD.

It localises to the cytoplasm. In terms of biological role, NAD-binding protein involved in the addition of a carboxymethylaminomethyl (cmnm) group at the wobble position (U34) of certain tRNAs, forming tRNA-cmnm(5)s(2)U34. The chain is tRNA uridine 5-carboxymethylaminomethyl modification enzyme MnmG from Vibrio cholerae serotype O1 (strain ATCC 39541 / Classical Ogawa 395 / O395).